The primary structure comprises 187 residues: Elongation factor P (187 aa).

It belongs to the elongation factor P family.

It is found in the cytoplasm. It participates in protein biosynthesis; polypeptide chain elongation. Its function is as follows. Involved in peptide bond synthesis. Stimulates efficient translation and peptide-bond synthesis on native or reconstituted 70S ribosomes in vitro. Probably functions indirectly by altering the affinity of the ribosome for aminoacyl-tRNA, thus increasing their reactivity as acceptors for peptidyl transferase. This is Elongation factor P from Granulibacter bethesdensis (strain ATCC BAA-1260 / CGDNIH1).